The primary structure comprises 500 residues: Probable malate:quinone oxidoreductase (500 aa).

This sequence belongs to the MQO family. Requires FAD as cofactor.

The enzyme catalyses (S)-malate + a quinone = a quinol + oxaloacetate. Its pathway is carbohydrate metabolism; tricarboxylic acid cycle; oxaloacetate from (S)-malate (quinone route): step 1/1. This is Probable malate:quinone oxidoreductase from Bacillus thuringiensis (strain Al Hakam).